A 310-amino-acid chain; its full sequence is tRNA dimethylallyltransferase (310 aa).

Position 15–22 (G15–T22) interacts with ATP. Residue T17–T22 participates in substrate binding.

Belongs to the IPP transferase family. As to quaternary structure, monomer. The cofactor is Mg(2+).

The catalysed reaction is adenosine(37) in tRNA + dimethylallyl diphosphate = N(6)-dimethylallyladenosine(37) in tRNA + diphosphate. Catalyzes the transfer of a dimethylallyl group onto the adenine at position 37 in tRNAs that read codons beginning with uridine, leading to the formation of N6-(dimethylallyl)adenosine (i(6)A). The protein is tRNA dimethylallyltransferase of Nocardioides sp. (strain ATCC BAA-499 / JS614).